The chain runs to 374 residues: Chaperone protein DnaJ (374 aa).

One can recognise a J domain in the interval 5–70 (DYYEVLGVER…SKRAAFDQYG (66 aa)). The CR-type zinc finger occupies 133 to 211 (GTTVSIRVPT…CHGEGRVEEY (79 aa)). Zn(2+) contacts are provided by Cys146, Cys149, Cys163, Cys166, Cys185, Cys188, Cys199, and Cys202. 4 CXXCXGXG motif repeats span residues 146-153 (CQPCDGSG), 163-170 (CPTCGGIG), 185-192 (CPRCHGQG), and 199-206 (CTSCHGEG).

Belongs to the DnaJ family. Homodimer. Requires Zn(2+) as cofactor.

It localises to the cytoplasm. In terms of biological role, participates actively in the response to hyperosmotic and heat shock by preventing the aggregation of stress-denatured proteins and by disaggregating proteins, also in an autonomous, DnaK-independent fashion. Unfolded proteins bind initially to DnaJ; upon interaction with the DnaJ-bound protein, DnaK hydrolyzes its bound ATP, resulting in the formation of a stable complex. GrpE releases ADP from DnaK; ATP binding to DnaK triggers the release of the substrate protein, thus completing the reaction cycle. Several rounds of ATP-dependent interactions between DnaJ, DnaK and GrpE are required for fully efficient folding. Also involved, together with DnaK and GrpE, in the DNA replication of plasmids through activation of initiation proteins. This chain is Chaperone protein DnaJ, found in Pseudomonas putida (strain GB-1).